The sequence spans 304 residues: Recombination-associated protein RdgC (304 aa).

The protein belongs to the RdgC family.

It is found in the cytoplasm. The protein resides in the nucleoid. May be involved in recombination. In Shewanella baltica (strain OS185), this protein is Recombination-associated protein RdgC.